The following is a 248-amino-acid chain: Adenylate kinase isoenzyme 6 homolog HBR1 (248 aa).

ATP-binding residues include Gly-19, Gly-21, Lys-22, Ser-23, and Ser-24. Positions Asn-49–Val-72 are NMPbind. The segment at Thr-124–Glu-134 is LID. Arg-125 contacts ATP. Residues Asp-188–Gln-248 are disordered. Residues Asp-202–Glu-238 are compositionally biased toward acidic residues. A compositionally biased stretch (basic and acidic residues) spans Glu-239–Gln-248.

Belongs to the adenylate kinase family. AK6 subfamily. As to quaternary structure, interacts with small ribosomal subunit protein uS11. Not a structural component of 43S pre-ribosomes, but transiently interacts with them by binding to uS11.

Its subcellular location is the cytoplasm. The protein resides in the nucleus. It carries out the reaction AMP + ATP = 2 ADP. It catalyses the reaction ATP + H2O = ADP + phosphate + H(+). In terms of biological role, broad-specificity nucleoside monophosphate (NMP) kinase that catalyzes the reversible transfer of the terminal phosphate group between nucleoside triphosphates and monophosphates. Also has ATPase activity. Involved in the late cytoplasmic maturation steps of the 40S ribosomal particles, specifically 18S rRNA maturation. While NMP activity is not required for ribosome maturation, ATPase activity is. Associates transiently with small ribosomal subunit protein uS11. ATP hydrolysis breaks the interaction with uS11. May temporarily remove uS11 from the ribosome to enable a conformational change of the ribosomal RNA that is needed for the final maturation step of the small ribosomal subunit. Its NMP activity may have a role in nuclear energy homeostasis. Induces transcription of mating-type proteins ALPHA1 and ALPHA2 and moderately represses transcription of mating-type protein A1 in response to hemoglobin and growth signals. Involved in the induction of a high affinity fibronectin receptor by sub-inhibitory dosages of caspofungin. The sequence is that of Adenylate kinase isoenzyme 6 homolog HBR1 (HBR1) from Candida albicans (strain SC5314 / ATCC MYA-2876) (Yeast).